Here is a 636-residue protein sequence, read N- to C-terminus: MVQASSHAEGGHEGKQGAARSLGLLVAAVGVVYGDIGTSPLYTLKEVFTGGYGVPVNHDGVLGILSLILWSLLWVVSFKYVMFILRADNQGEGGTMALTALARRATAAYPRLRTLMVICGLIGASLFYGDSMITPAVSVLSAVEGMGLAFDGIDHWVVPISLVVLVALFLVQKHGTETIGKLFGPIMVTWFVVLGALGVHGISQSPEVLKAFNPGWAVNFFVVHPGMGVAILGAVVLALTGAEALYADMGHFGRKPIARAWFILVLPALVLNYFGQGALLLQNPEAARNPFYLLAPSWALLPLVGLATMATVIASQAVISGAFSLTRQAIQLGYIPRMQIQHTSSDEQGQIYIGAVNWTLMVGVVLLVIGFESSGALAAAYGVAVTGTMLMTTILVSAVMLLLWKWPPVLAVPLLMGFLFVDGLFFAANVPKIVQGGAFPVLAGGVLFLLMSTWKRGKQILVERIDEGALPLPLFISSIRIQPPHRVEGTAVFLTARSDAVPHALLHNMLHNQVLHSQVVLLTVVSEDQPRVPEHERFEVEAYGDGFFRVLLHFGFMDEPDVPAALKLCHLDDLDFTPMRTTYFLSRETVIASRLEGMSRWRGNLFAFLLKNANGNLRFFNLPLNRVIELGTQVEI.

12 consecutive transmembrane segments (helical) span residues 22–42 (LGLL…SPLY), 64–84 (ILSL…VMFI), 115–135 (LMVI…MITP), 150–170 (FDGI…ALFL), 182–202 (LFGP…VHGI), 220–240 (FFVV…LALT), 261–281 (WFIL…ALLL), 293–313 (LLAP…ATVI), 351–371 (IYIG…VIGF), 383–403 (VAVT…MLLL), 408–428 (PVLA…FFAA), and 433–453 (IVQG…LMST).

The protein belongs to the HAK/KUP transporter (TC 2.A.72) family.

The protein localises to the cell inner membrane. It catalyses the reaction K(+)(in) + H(+)(in) = K(+)(out) + H(+)(out). In terms of biological role, transport of potassium into the cell. Likely operates as a K(+):H(+) symporter. The polypeptide is Probable potassium transport system protein Kup (Pseudomonas putida (strain GB-1)).